Consider the following 151-residue polypeptide: Large ribosomal subunit protein eL19 (151 aa).

Residues lysine 57 to glycine 81 are compositionally biased toward basic residues. The segment at lysine 57–glutamate 95 is disordered.

This sequence belongs to the eukaryotic ribosomal protein eL19 family. In terms of assembly, part of the 50S ribosomal subunit.

Its function is as follows. Binds to the 23S rRNA. In Methanocaldococcus jannaschii (strain ATCC 43067 / DSM 2661 / JAL-1 / JCM 10045 / NBRC 100440) (Methanococcus jannaschii), this protein is Large ribosomal subunit protein eL19.